The following is a 161-amino-acid chain: UPF0506 protein SJCHGC02965 (161 aa).

A signal peptide spans 1-13 (QLLILCLVTVINS). Asn15, Asn19, Asn31, Asn43, Asn47, Asn59, Asn63, Asn75, and Asn121 each carry an N-linked (GlcNAc...) asparagine glycan. Cystine bridges form between Cys127–Cys141, Cys134–Cys145, and Cys140–Cys150.

Belongs to the UPF0506 family.

Its subcellular location is the secreted. This chain is UPF0506 protein SJCHGC02965, found in Schistosoma japonicum (Blood fluke).